We begin with the raw amino-acid sequence, 118 residues long: Small ribosomal subunit protein uS13 (118 aa).

Positions 94–118 are disordered; it reads GLPLRGQRTKTNARTRKGPRKPIRK.

It belongs to the universal ribosomal protein uS13 family. Part of the 30S ribosomal subunit. Forms a loose heterodimer with protein S19. Forms two bridges to the 50S subunit in the 70S ribosome.

Located at the top of the head of the 30S subunit, it contacts several helices of the 16S rRNA. In the 70S ribosome it contacts the 23S rRNA (bridge B1a) and protein L5 of the 50S subunit (bridge B1b), connecting the 2 subunits; these bridges are implicated in subunit movement. Contacts the tRNAs in the A and P-sites. The protein is Small ribosomal subunit protein uS13 of Chromohalobacter salexigens (strain ATCC BAA-138 / DSM 3043 / CIP 106854 / NCIMB 13768 / 1H11).